Reading from the N-terminus, the 103-residue chain is Histone H4, minor (103 aa).

Positions 1–12 are enriched in gly residues; the sequence is MAGGKGGKGMGK. The segment at 1–29 is disordered; that stretch reads MAGGKGGKGMGKVGAKRHSRKSNKASIEG. K5, K8, K12, and K16 each carry N6-acetyllysine. Residues 14–23 show a composition bias toward basic residues; it reads GAKRHSRKSN. The DNA-binding element occupies 16-21; sequence KRHSRK.

Belongs to the histone H4 family. In terms of assembly, the nucleosome is a histone octamer containing two molecules each of H2A, H2B, H3 and H4 assembled in one H3-H4 heterotetramer and two H2A-H2B heterodimers. The octamer wraps approximately 147 bp of DNA.

Its subcellular location is the nucleus. The protein resides in the chromosome. Functionally, core component of nucleosome. Nucleosomes wrap and compact DNA into chromatin, limiting DNA accessibility to the cellular machineries which require DNA as a template. Histones thereby play a central role in transcription regulation, DNA repair, DNA replication and chromosomal stability. DNA accessibility is regulated via a complex set of post-translational modifications of histones, also called histone code, and nucleosome remodeling. This is Histone H4, minor from Tetrahymena pyriformis.